We begin with the raw amino-acid sequence, 242 residues long: MEWTDEGIVLGVRRHGEGNAIVELLTRLRGRHLGMVRGGASRRQAPLLQPGNTVSATWRARLDEHMGNYALEPAVVRTEVLMRAPHAAFGFTHMAQILHLLPERDPHEGLFLTVGAILDAFENRESAGRLLARFELALLAELGFGLELETCAATGRREDLVYVSPKSGRAVCGEAGAPYADRLFALPRFLVDGTAPPAGDVEDALRLTGYFLLTRVLEPRGLGLSDARAAFISAWRRSIAPA.

The protein belongs to the RecO family.

Involved in DNA repair and RecF pathway recombination. In Xanthobacter autotrophicus (strain ATCC BAA-1158 / Py2), this protein is DNA repair protein RecO.